A 487-amino-acid chain; its full sequence is Betaine aldehyde dehydrogenase (487 aa).

K(+)-binding residues include S26 and D93. 150 to 152 (GAW) serves as a coordination point for NAD(+). The active-site Charge relay system is the K162. NAD(+) is bound by residues 176–179 (KPSE) and 229–232 (SVPT). K(+) is bound at residue L244. E250 functions as the Proton acceptor in the catalytic mechanism. NAD(+) contacts are provided by G252, C284, and E384. C284 acts as the Nucleophile in catalysis. Residue C284 is modified to Cysteine sulfenic acid (-SOH). The K(+) site is built by K454 and G457. The Charge relay system role is filled by E461.

This sequence belongs to the aldehyde dehydrogenase family. Dimer of dimers. It depends on K(+) as a cofactor.

It catalyses the reaction betaine aldehyde + NAD(+) + H2O = glycine betaine + NADH + 2 H(+). It participates in amine and polyamine biosynthesis; betaine biosynthesis via choline pathway; betaine from betaine aldehyde: step 1/1. Involved in the biosynthesis of the osmoprotectant glycine betaine. Catalyzes the irreversible oxidation of betaine aldehyde to the corresponding acid. In Rhizobium johnstonii (strain DSM 114642 / LMG 32736 / 3841) (Rhizobium leguminosarum bv. viciae), this protein is Betaine aldehyde dehydrogenase.